A 231-amino-acid chain; its full sequence is 7-cyano-7-deazaguanine synthase (231 aa).

8–18 (FSGGQDSTTCL) contacts ATP. 4 residues coordinate Zn(2+): Cys188, Cys197, Cys200, and Cys203.

It belongs to the QueC family. Requires Zn(2+) as cofactor.

It carries out the reaction 7-carboxy-7-deazaguanine + NH4(+) + ATP = 7-cyano-7-deazaguanine + ADP + phosphate + H2O + H(+). The protein operates within purine metabolism; 7-cyano-7-deazaguanine biosynthesis. Functionally, catalyzes the ATP-dependent conversion of 7-carboxy-7-deazaguanine (CDG) to 7-cyano-7-deazaguanine (preQ(0)). The sequence is that of 7-cyano-7-deazaguanine synthase from Salmonella agona (strain SL483).